A 212-amino-acid chain; its full sequence is Uridine kinase (212 aa).

13-20 provides a ligand contact to ATP; sequence GASASGKS.

This sequence belongs to the uridine kinase family.

It localises to the cytoplasm. It carries out the reaction uridine + ATP = UMP + ADP + H(+). The enzyme catalyses cytidine + ATP = CMP + ADP + H(+). It participates in pyrimidine metabolism; CTP biosynthesis via salvage pathway; CTP from cytidine: step 1/3. It functions in the pathway pyrimidine metabolism; UMP biosynthesis via salvage pathway; UMP from uridine: step 1/1. This is Uridine kinase from Shewanella denitrificans (strain OS217 / ATCC BAA-1090 / DSM 15013).